Consider the following 548-residue polypeptide: Sterol esterase TGL1 (548 aa).

M1 is modified (N-acetylmethionine; partial). Over 1–13 (MYFPFLGRLSITD) the chain is Lumenal. Residues 14–34 (YIIVVLVYIESIISSVLKLIP) form a helical membrane-spanning segment. At 35 to 548 (QPMINLFEWL…TTALDALNKE (514 aa)) the chain is on the cytoplasmic side. In terms of domain architecture, AB hydrolase-1 spans 107–402 (VVYLHHGLLM…NYEHLDLIWG (296 aa)). The GXSXG motif lies at 199–203 (GFSQG). Catalysis depends on S201, which acts as the Nucleophile. K246 participates in a covalent cross-link: Glycyl lysine isopeptide (Lys-Gly) (interchain with G-Cter in ubiquitin). Active-site charge relay system residues include D369 and H396. Disordered stretches follow at residues 449–477 (TTHP…EADE) and 496–516 (IDED…HKEQ). Phosphoserine occurs at positions 462 and 466. Residues 502 to 516 (NEHQDDTEDQIHKEQ) show a composition bias toward basic and acidic residues. Phosphoserine is present on residues S521 and S538. The tract at residues 528-548 (KDLRQLDANSSTTALDALNKE) is disordered. T539 is subject to Phosphothreonine.

Belongs to the AB hydrolase superfamily. In terms of processing, not N-glycosylated.

It localises to the lipid droplet. It is found in the membrane. The enzyme catalyses a sterol ester + H2O = a sterol + a fatty acid + H(+). Functionally, mediates the hydrolysis of steryl esters (SE). Preferentially hydrolyzes ergosteryl and zymosteryl esters. Required for mobilization of SEs from lipid particles/droplets, thereby playing a central role in lipid metabolism and sterol homeostasis. Sterol intermediates stored in SE and set free by SE hydrolases are recycled to the sterol biosynthetic pathway and converted to the final product, ergosterol, in the endoplasmic reticulum. Also has weak lipase activity toward triglycerides at neutral pH, however, the physiological relevance of this activity is unclear. In Saccharomyces cerevisiae (strain ATCC 204508 / S288c) (Baker's yeast), this protein is Sterol esterase TGL1 (TGL1).